We begin with the raw amino-acid sequence, 259 residues long: Nuclear egress protein 1 (259 aa).

Residues 80-184 (CLDLSPYANE…YVVFQTRTLH (105 aa)) form a CCCH-type zinc finger.

This sequence belongs to the herpesviridae NEC1 protein family. As to quaternary structure, forms a heterohexameric complex with NEC2. Interacts with capsid vertex specific component 2/CVC2; this interaction directs the capsid to the host inner nuclear membrane to initiate budding. Post-translationally, phosphorylated at serine residues in the N-terminus. This phosphorylation regulates the localization within the inner nuclear membrane.

Its subcellular location is the host nucleus inner membrane. In terms of biological role, plays an essential role in virion nuclear egress, the first step of virion release from infected cell. Within the host nucleus, NEC1 interacts with the newly formed capsid through the vertexes and directs it to the inner nuclear membrane by associating with NEC2. Induces the budding of the capsid at the inner nuclear membrane as well as its envelopment into the perinuclear space. There, the NEC1/NEC2 complex promotes the fusion of the enveloped capsid with the outer nuclear membrane and the subsequent release of the viral capsid into the cytoplasm where it will reach the secondary budding sites in the host Golgi or trans-Golgi network. The sequence is that of Nuclear egress protein 1 from Homo sapiens (Human).